Consider the following 529-residue polypeptide: MSMKQTSVFLLIQLICYFRPGACGKVLVWPTEYSHWINIKIILNELAQRGHEVTVLVSSASILIEPTKESSINFEIYSVPLSKSDLEYSFAKWIDEWTRDFETLSIWTYYSKMQKVFNEYSDVVENLCKALIWNKSLMKKLQGSQFDVILADAVGPCGELLAELLKTPLVYSLRFCPGYRCEKFSGGLPLPPSYVPVVLSELSDRMTFVERVKNMLQMLYFDFWFQPFKEKSWSQFYSDVLGRPTTLTEMMGKADIWLIRTFWDLEFPHPFLPNFDFVGGLHCKPAKPLPREMEEFVQSSGEHGVVVFSLGSMVKNLTEEKANVVASALAQIPQKVVWRFDGKKPDTLGSNTRLYKWIPQNDLLGHPKTKAFVAHGGTNGIYEAIYHGIPIVGIPLFADQPDNINHMVAKGAAVRVDFSILSTTGLLTALKIVMNDPSYKENAMRLSRIHHDQPVKPLDRAVFWIEYVMRHKGAKHLRSTLHDLSWFQYHSLDVIGFLLLCVVGVVFIITKFCLFCCRKTANMGKKKKE.

Positions 1–23 (MSMKQTSVFLLIQLICYFRPGAC) are cleaved as a signal peptide. N-linked (GlcNAc...) asparagine glycans are attached at residues asparagine 134 and asparagine 316. Residues 494-510 (VIGFLLLCVVGVVFIIT) form a helical membrane-spanning segment.

This sequence belongs to the UDP-glycosyltransferase family.

The protein resides in the endoplasmic reticulum membrane. It catalyses the reaction glucuronate acceptor + UDP-alpha-D-glucuronate = acceptor beta-D-glucuronoside + UDP + H(+). The enzyme catalyses 17beta-estradiol + UDP-alpha-D-glucuronate = 17beta-estradiol 17-O-(beta-D-glucuronate) + UDP + H(+). In terms of biological role, UDP-glucuronosyltransferase (UGT) that catalyzes phase II biotransformation reactions in which lipophilic substrates are conjugated with glucuronic acid to increase the metabolite's water solubility, thereby facilitating excretion into either the urine or bile. Essential for the elimination and detoxification of drugs, xenobiotics and endogenous compounds. Catalyzes the glucuronidation of the endogenous estrogen hormone estradiol. The sequence is that of UDP-glucuronosyltransferase 2B1 from Rattus norvegicus (Rat).